We begin with the raw amino-acid sequence, 2319 residues long: Coagulation factor VIII (2319 aa).

The first 19 residues, 1-19 (MQIALFACFFLSLFNFCSS), serve as a signal peptide directing secretion. Plastocyanin-like domains follow at residues 20–199 (AIRR…LLVC) and 207–349 (ERTQ…VDSC). Residues 20–349 (AIRRYYLGAV…MEAYVKVDSC (330 aa)) enclose the F5/8 type A 1 domain. Asparagine 61 carries an N-linked (GlcNAc...) asparagine glycan. Cysteine 173 and cysteine 199 are disulfide-bonded. Asparagine 233 and asparagine 259 each carry an N-linked (GlcNAc...) asparagine glycan. At tyrosine 367 the chain carries Sulfotyrosine. Plastocyanin-like domains lie at 399 to 573 (KTWI…LLIC) and 583 to 730 (NQMM…VSSC). One can recognise an F5/8 type A 2 domain in the interval 399–730 (KTWIHYISAE…MTALLKVSSC (332 aa)). A glycan (N-linked (GlcNAc...) asparagine) is linked at asparagine 423. A disulfide bond links cysteine 547 and cysteine 573. The N-linked (GlcNAc...) asparagine glycan is linked to asparagine 601. Sulfotyrosine is present on residues tyrosine 737, tyrosine 738, and tyrosine 742. Residues 760 to 1640 (SFFQNTNHPN…IPPVLKRHQR (881 aa)) are b. 19 N-linked (GlcNAc...) asparagine glycosylation sites follow: asparagine 880, asparagine 958, asparagine 1015, asparagine 1022, asparagine 1026, asparagine 1044, asparagine 1076, asparagine 1087, asparagine 1136, asparagine 1161, asparagine 1192, asparagine 1255, asparagine 1268, asparagine 1273, asparagine 1274, asparagine 1302, asparagine 1316, asparagine 1340, and asparagine 1378. Positions 1530–1549 (WNKAKRHGESIKGKTESSKN) are disordered. The segment covering 1536-1548 (HGESIKGKTESSK) has biased composition (basic and acidic residues). A sulfotyrosine mark is found at tyrosine 1669 and tyrosine 1687. 2 consecutive Plastocyanin-like domains span residues 1683–1845 (KTRH…LLIC) and 1855–2008 (GRQV…SKQC). In terms of domain architecture, F5/8 type A 3 spans 1683 to 2008 (KTRHYFIAAV…TLFLVYSKQC (326 aa)). Asparagine 1797 is a glycosylation site (N-linked (GlcNAc...) asparagine). Intrachain disulfides connect cysteine 1819–cysteine 1845, cysteine 2008–cysteine 2156, and cysteine 2161–cysteine 2313. 2 F5/8 type C domains span residues 2008-2156 (CQIP…LMGC) and 2161-2313 (CSIP…ILGC). Asparagine 2105 carries N-linked (GlcNAc...) asparagine glycosylation.

This sequence belongs to the multicopper oxidase family. In terms of assembly, interacts with vWF. vWF binding is essential for the stabilization of F8 in circulation. Post-translationally, the binding of vWF and activation depend on the sulfation of Tyr-1669. In terms of processing, proteolytically cleaved by cathepsin CTSG to produce a partially activated form. Found in most tissues.

Its subcellular location is the secreted. It localises to the extracellular space. Its function is as follows. Factor VIII, along with calcium and phospholipid, acts as a cofactor for factor IXa when it converts factor X to the activated form, factor Xa. In Mus musculus (Mouse), this protein is Coagulation factor VIII (F8).